Reading from the N-terminus, the 807-residue chain is Glycerol-3-phosphate acyltransferase (807 aa).

An HXXXXD motif motif is present at residues 308-313 (CHRSHM).

This sequence belongs to the GPAT/DAPAT family.

The protein localises to the cell inner membrane. The enzyme catalyses sn-glycerol 3-phosphate + an acyl-CoA = a 1-acyl-sn-glycero-3-phosphate + CoA. It functions in the pathway phospholipid metabolism; CDP-diacylglycerol biosynthesis; CDP-diacylglycerol from sn-glycerol 3-phosphate: step 1/3. The sequence is that of Glycerol-3-phosphate acyltransferase from Shewanella putrefaciens (strain CN-32 / ATCC BAA-453).